A 726-amino-acid chain; its full sequence is Catalase-peroxidase (726 aa).

The segment at 1-33 (MSTTDDTHNTLSTGKCPFHQGGHDRSAGAGTAS) is disordered. The segment at residues 105-226 (WHGAGTYRSI…LGATEMGLIY (122 aa)) is a cross-link (tryptophyl-tyrosyl-methioninium (Trp-Tyr) (with M-252)). Residue histidine 106 is the Proton acceptor of the active site. The segment at residues 226-252 (YVNPEGPDHSGEPLSAAAAIRATFGNM) is a cross-link (tryptophyl-tyrosyl-methioninium (Tyr-Met) (with W-105)). A heme b-binding site is contributed by histidine 267.

The protein belongs to the peroxidase family. Peroxidase/catalase subfamily. As to quaternary structure, homodimer or homotetramer. The cofactor is heme b. Formation of the three residue Trp-Tyr-Met cross-link is important for the catalase, but not the peroxidase activity of the enzyme.

It catalyses the reaction H2O2 + AH2 = A + 2 H2O. The catalysed reaction is 2 H2O2 = O2 + 2 H2O. Bifunctional enzyme with both catalase and broad-spectrum peroxidase activity. The sequence is that of Catalase-peroxidase from Salmonella paratyphi A (strain ATCC 9150 / SARB42).